The sequence spans 572 residues: Formate--tetrahydrofolate ligase (572 aa).

65 to 72 (TPLGEGKT) contributes to the ATP binding site.

It belongs to the formate--tetrahydrofolate ligase family.

It catalyses the reaction (6S)-5,6,7,8-tetrahydrofolate + formate + ATP = (6R)-10-formyltetrahydrofolate + ADP + phosphate. It participates in one-carbon metabolism; tetrahydrofolate interconversion. In Chloroflexus aurantiacus (strain ATCC 29366 / DSM 635 / J-10-fl), this protein is Formate--tetrahydrofolate ligase.